The primary structure comprises 151 residues: MNDEFSRASEHIWKYFELHAQQRMTVFNFYIAITGLLAAGIGVTLQQGGKYVLFTSLMGVFVAFISFIFWKLDQRVSILIKNAEIALQDLECQFSNEKLRIITKDNSSNLLNLGISSSWTYGKCFRISFVIVGFTGILLAITPFLMKVSTS.

3 consecutive transmembrane segments (helical) span residues 25-45, 52-72, and 127-147; these read TVFNFYIAITGLLAAGIGVTL, VLFTSLMGVFVAFISFIFWKL, and ISFVIVGFTGILLAITPFLMK.

This sequence belongs to the Cap19 family.

The protein localises to the cell inner membrane. Its function is as follows. Membrane protein component of a CBASS (cyclic oligonucleotide-based antiphage signaling system) which provides immunity against bacteriophage. The CD-NTase protein synthesizes cyclic nucleotides in response to infection; these serve as specific second messenger signals. The signals activate a diverse range of effectors, leading to bacterial cell death and thus abortive phage infection. A type III CBASS system. Expression of this CBASS system (Cap17-CapW-CdnC-Cap7-Cap6-Cap18-Cap19) in a susceptible E.coli (strain JP313) confers resistance to bacteriophage lambda cI-. The protein is CD-NTase-associated protein 19 of Escherichia coli.